Here is a 186-residue protein sequence, read N- to C-terminus: Catechol O-methyltransferase (186 aa).

Residues V7, E29, S37, E55, L56, 82–85 (GASQ), S84, and D106 each bind S-adenosyl-L-methionine. D106 provides a ligand contact to Mg(2+). K109 is a binding site for substrate. The Mg(2+) site is built by D134 and N135. N135 and E164 together coordinate substrate. The residue at position 182 (S182) is a Phosphoserine.

It belongs to the class I-like SAM-binding methyltransferase superfamily. Cation-dependent O-methyltransferase family. Mg(2+) serves as cofactor.

The protein resides in the cytoplasm. Its subcellular location is the cell membrane. It catalyses the reaction a catechol + S-adenosyl-L-methionine = a guaiacol + S-adenosyl-L-homocysteine + H(+). It carries out the reaction 2-hydroxyestrone + S-adenosyl-L-methionine = 2-hydroxy-3-methoxy-estrone + S-adenosyl-L-homocysteine + H(+). The catalysed reaction is 4-hydroxyestrone + S-adenosyl-L-methionine = 4-methoxyestrone + S-adenosyl-L-homocysteine + H(+). The enzyme catalyses 2-hydroxyestrone + S-adenosyl-L-methionine = 2-methoxyestrone + S-adenosyl-L-homocysteine + H(+). It catalyses the reaction 4-hydroxy-17beta-estradiol + S-adenosyl-L-methionine = 4-methoxy-17beta-estradiol + S-adenosyl-L-homocysteine + H(+). It carries out the reaction 2-hydroxy-17beta-estradiol + S-adenosyl-L-methionine = 2-hydroxy-3-methoxy-17beta-estradiol + S-adenosyl-L-homocysteine + H(+). The catalysed reaction is 2-hydroxy-17beta-estradiol + S-adenosyl-L-methionine = 2-methoxy-17beta-estradiol + S-adenosyl-L-homocysteine + H(+). Functionally, catalyzes the O-methylation, and thereby the inactivation, of catecholamine neurotransmitters and catechol hormones. Also shortens the biological half-lives of certain neuroactive drugs, like L-DOPA, alpha-methyl DOPA and isoproterenol. The protein is Catechol O-methyltransferase (COMT) of Sus scrofa (Pig).